A 301-amino-acid chain; its full sequence is Bifunctional dTDP-4-dehydrorhamnose 3,5-epimerase/dTDP-4-dehydrorhamnose reductase (301 aa).

Residues Trp-23–Ile-24, Gly-69–Thr-71, and Tyr-111 contribute to the NADPH site.

The protein belongs to the dTDP-4-dehydrorhamnose reductase family. As to expression, expressed in roots, leaves, stems and flowers.

It catalyses the reaction dTDP-4-dehydro-6-deoxy-alpha-D-glucose = dTDP-4-dehydro-beta-L-rhamnose. The enzyme catalyses dTDP-beta-L-rhamnose + NADP(+) = dTDP-4-dehydro-beta-L-rhamnose + NADPH + H(+). Its pathway is carbohydrate biosynthesis; dTDP-L-rhamnose biosynthesis. Bifunctional enzyme involved in dTDP-beta-L-rhamnose biosynthesis. Catalyzes the epimerization of the C3' and C5'positions of dTDP-6-deoxy-4-keto-alpha-D-glucose to form dTDP-4-keto-beta-L-rhamnose and its reduction to yield dTDP-beta-L-rhamnose. Can form UDP-beta-L-rhamnose from UDP-6-deoxy-4-keto-alpha-D-glucose, but cannot convert GDP-4-dehydro-6-deoxy-D-mannose to GDP-fucose. The protein is Bifunctional dTDP-4-dehydrorhamnose 3,5-epimerase/dTDP-4-dehydrorhamnose reductase of Arabidopsis thaliana (Mouse-ear cress).